A 27-amino-acid chain; its full sequence is Phospholipase A2 P-elapitoxin-Aa1a alpha chain (27 aa).

It belongs to the phospholipase A2 family. Group I subfamily. Heterotrimer of alpha, beta and gamma chains, each related to PLA2. It depends on Ca(2+) as a cofactor. In terms of tissue distribution, expressed by the venom gland.

It localises to the secreted. The enzyme catalyses a 1,2-diacyl-sn-glycero-3-phosphocholine + H2O = a 1-acyl-sn-glycero-3-phosphocholine + a fatty acid + H(+). Functionally, heterotrimer: presynaptic neurotoxin. Inhibits nerve-evoked twitch contractions but not responses to cholinergic agonists acetylcholine and carbachol and to depolarizing agonist KCl. Causes a fade in tetanic contractions. Displays a triphasic mode of action with depression, enhancement and blockade of neurotransmission. Does not display myotoxic activity such as changes in baseline muscle tension or inhibition of directly stimulated muscle twitches. All subunits are necessary for maximum toxicity. In terms of biological role, monomer: Snake venom phospholipase A2 (PLA2) alpha chain that has enzymatic activity. PLA2 catalyzes the calcium-dependent hydrolysis of the 2-acyl groups in 3-sn-phosphoglycerides. The sequence is that of Phospholipase A2 P-elapitoxin-Aa1a alpha chain from Acanthophis antarcticus (Common death adder).